We begin with the raw amino-acid sequence, 256 residues long: Imidazole glycerol phosphate synthase subunit HisF (256 aa).

Active-site residues include Asp-12 and Asp-131.

Belongs to the HisA/HisF family. As to quaternary structure, heterodimer of HisH and HisF.

Its subcellular location is the cytoplasm. The enzyme catalyses 5-[(5-phospho-1-deoxy-D-ribulos-1-ylimino)methylamino]-1-(5-phospho-beta-D-ribosyl)imidazole-4-carboxamide + L-glutamine = D-erythro-1-(imidazol-4-yl)glycerol 3-phosphate + 5-amino-1-(5-phospho-beta-D-ribosyl)imidazole-4-carboxamide + L-glutamate + H(+). It functions in the pathway amino-acid biosynthesis; L-histidine biosynthesis; L-histidine from 5-phospho-alpha-D-ribose 1-diphosphate: step 5/9. In terms of biological role, IGPS catalyzes the conversion of PRFAR and glutamine to IGP, AICAR and glutamate. The HisF subunit catalyzes the cyclization activity that produces IGP and AICAR from PRFAR using the ammonia provided by the HisH subunit. In Micrococcus luteus (strain ATCC 4698 / DSM 20030 / JCM 1464 / CCM 169 / CCUG 5858 / IAM 1056 / NBRC 3333 / NCIMB 9278 / NCTC 2665 / VKM Ac-2230) (Micrococcus lysodeikticus), this protein is Imidazole glycerol phosphate synthase subunit HisF.